The primary structure comprises 359 residues: Heat-inducible transcription repressor HrcA (359 aa).

Belongs to the HrcA family.

In terms of biological role, negative regulator of class I heat shock genes (grpE-dnaK-dnaJ and groELS operons). Prevents heat-shock induction of these operons. The protein is Heat-inducible transcription repressor HrcA of Sinorhizobium medicae (strain WSM419) (Ensifer medicae).